Here is an 854-residue protein sequence, read N- to C-terminus: Protein unc-33 (854 aa).

Disordered regions lie at residues 57–114 (ETVS…IPAP), 130–327 (ELFG…DGNG), and 794–854 (VERV…TGFW). 2 stretches are compositionally biased toward polar residues: residues 58 to 68 (TVSNKSRSSEG) and 75 to 97 (RPNS…TSAR). The span at 193 to 202 (KVLRGEKSTP) shows a compositional bias: basic and acidic residues. A compositionally biased stretch (acidic residues) spans 240 to 257 (VDDEEEPEAEAQEMEEPQ). Residues 279-298 (HPSEDGDSTRNGETPTDRRN) are compositionally biased toward basic and acidic residues. Polar residues predominate over residues 802–811 (SSQQQKPQQN). Positions 816-827 (NSGDFDRNRTKV) are enriched in basic and acidic residues.

It belongs to the metallo-dependent hydrolases superfamily. Hydantoinase/dihydropyrimidinase family. Isoform a: Probable monomer. Isoform b: Probable homodimer. Isoform c: Probable homodimer. Probable heterodimer composed of isoform b and isoform c. Interacts with unc-14 and kinesin-1 motor complex light chain klc-1; both interactions regulate unc-33 neurite localization. Interacts with fln-1 (via calponin-homology (CH) domains and filamin repeat 18-19). Isoform c: Interacts with vab-8 isoform a. Expressed in ventral cord and nerve ring (at protein level). Isoform a: Expressed in nerve ring (at protein level). Expressed in the nervous system, two amphid socket cells and weakly in non-neuronal pharyngeal cells.

The protein resides in the cell projection. It is found in the axon. The protein localises to the dendrite. Its function is as follows. During neurogenesis, plays an essential role in axonal guidance and outgrowth by regulating the polarization of both microtubule and actin cytoskeletons. Establishes the asymmetry of axonal and dendrite microtubules and the polarized sorting of neuronal proteins. This is achieved in part by regulating the localization of kinesin-like protein unc-104. In neurons without a distal microtubule-organizing center (MTOC), also controls the organization of microtubules in dendrites. During the dorso-ventral axonal guidance and outgrowth of VD neurons, required downstream of Rac GTPases ced-10 and mig-2 to inhibit growth cone filopodial protrusion mediated by the unc-6/netrin receptor unc-40-unc-5. Specifically, regulates growth cone filopodial protrusion polarity, and thus migration, by promoting F-actin polarization and by restricting plus-end microtubule accumulation in the growth cone. Probably downstream of mab-20/Sema2a and mab-20 receptor plx-2, regulates the guidance of DD/VD neuron axons by modulating fln-1 interaction with F-actin which results in the remodeling of the actin cytoskeleton. In hermaphrodites, involved in sex myoblast (SM) migration by regulating the gonad-dependent repulsion of SMs. Functionally, in neurons, required for the polarized sorting of axonal proteins. In PLM neuron, regulates innexin unc-9 gap junction turnover by suppressing unc-9 transport out of gap junctions. Plays a role in locomotion and egg-laying. In terms of biological role, in PLM neuron, regulates innexin unc-9 gap junction turnover by suppressing unc-9 transport out of gap junctions. This Caenorhabditis elegans protein is Protein unc-33.